A 177-amino-acid chain; its full sequence is Large ribosomal subunit protein uL6 (177 aa).

It belongs to the universal ribosomal protein uL6 family. As to quaternary structure, part of the 50S ribosomal subunit.

Functionally, this protein binds to the 23S rRNA, and is important in its secondary structure. It is located near the subunit interface in the base of the L7/L12 stalk, and near the tRNA binding site of the peptidyltransferase center. This chain is Large ribosomal subunit protein uL6, found in Citrobacter koseri (strain ATCC BAA-895 / CDC 4225-83 / SGSC4696).